We begin with the raw amino-acid sequence, 218 residues long: Small ribosomal subunit protein uS3c (218 aa).

Positions 47 to 118 (VQKEMRISSG…RLNVVITRVA (72 aa)) constitute a KH type-2 domain.

Belongs to the universal ribosomal protein uS3 family. As to quaternary structure, part of the 30S ribosomal subunit.

The protein resides in the plastid. The protein localises to the chloroplast. The sequence is that of Small ribosomal subunit protein uS3c (rps3) from Ceratophyllum demersum (Rigid hornwort).